A 37-amino-acid chain; its full sequence is Large ribosomal subunit protein bL36c (37 aa).

This sequence belongs to the bacterial ribosomal protein bL36 family.

It is found in the plastid. This Helicosporidium sp. subsp. Simulium jonesii (Green alga) protein is Large ribosomal subunit protein bL36c.